Reading from the N-terminus, the 259-residue chain is Hydroxyacylglutathione hydrolase (259 aa).

His56, His58, Asp60, His61, His112, Asp133, and His171 together coordinate Zn(2+). Residues 220–243 (NPFLRTGETSVKEKADERSDAQNT) are disordered. The segment covering 229–239 (SVKEKADERSD) has biased composition (basic and acidic residues).

It belongs to the metallo-beta-lactamase superfamily. Glyoxalase II family. As to quaternary structure, monomer. Zn(2+) is required as a cofactor.

It catalyses the reaction an S-(2-hydroxyacyl)glutathione + H2O = a 2-hydroxy carboxylate + glutathione + H(+). The protein operates within secondary metabolite metabolism; methylglyoxal degradation; (R)-lactate from methylglyoxal: step 2/2. Thiolesterase that catalyzes the hydrolysis of S-D-lactoyl-glutathione to form glutathione and D-lactic acid. The sequence is that of Hydroxyacylglutathione hydrolase from Pseudomonas syringae pv. syringae (strain B728a).